A 189-amino-acid chain; its full sequence is Interferon alpha-1 (189 aa).

A signal peptide spans 1–23 (MAPTSAFLTALVLLSCNAICSLG). 2 cysteine pairs are disulfide-bonded: C24-C122 and C52-C162.

This sequence belongs to the alpha/beta interferon family. Interacts with CR2.

It is found in the secreted. Functionally, produced by macrophages, IFN-alpha have antiviral activities. Interferon stimulates the production of two enzymes: a protein kinase and an oligoadenylate synthetase. The protein is Interferon alpha-1 of Sus scrofa (Pig).